The sequence spans 918 residues: Probable lipoxygenase 6 (918 aa).

The segment at Ala-56–Glu-76 is disordered. A PLAT domain is found at Gln-90–Ser-218. One can recognise a Lipoxygenase domain in the interval Pro-221 to Ile-918. Fe cation is bound by residues His-573, His-578, His-765, Asn-769, and Ile-918.

It belongs to the lipoxygenase family. Fe cation is required as a cofactor.

It carries out the reaction (9Z,12Z)-octadecadienoate + O2 = (13S)-hydroperoxy-(9Z,11E)-octadecadienoate. The enzyme catalyses (9Z,12Z,15Z)-octadecatrienoate + O2 = (13S)-hydroperoxy-(9Z,11E,15Z)-octadecatrienoate. The protein operates within lipid metabolism; oxylipin biosynthesis. Plant lipoxygenase may be involved in a number of diverse aspects of plant physiology including growth and development, pest resistance, and senescence or responses to wounding. Catalyzes the hydroperoxidation of lipids containing a cis,cis-1,4-pentadiene structure. The polypeptide is Probable lipoxygenase 6 (Oryza sativa subsp. japonica (Rice)).